A 215-amino-acid chain; its full sequence is LexA repressor (215 aa).

The H-T-H motif DNA-binding region spans 29 to 49; the sequence is VREICSAVGFKSTSTVHSYLQ. Residues Ser-138 and Lys-175 each act as for autocatalytic cleavage activity in the active site.

The protein belongs to the peptidase S24 family. In terms of assembly, homodimer.

The catalysed reaction is Hydrolysis of Ala-|-Gly bond in repressor LexA.. Represses a number of genes involved in the response to DNA damage (SOS response), including recA and lexA. In the presence of single-stranded DNA, RecA interacts with LexA causing an autocatalytic cleavage which disrupts the DNA-binding part of LexA, leading to derepression of the SOS regulon and eventually DNA repair. This is LexA repressor from Ruminiclostridium cellulolyticum (strain ATCC 35319 / DSM 5812 / JCM 6584 / H10) (Clostridium cellulolyticum).